The following is a 234-amino-acid chain: Proteasome subunit alpha type-2 (234 aa).

The residue at position 2 (Ala-2) is an N-acetylalanine. At Tyr-6 the chain carries Phosphotyrosine. Phosphoserine occurs at positions 7, 14, and 16. A Phosphotyrosine modification is found at Tyr-24. Lys-70 carries the post-translational modification N6-acetyllysine. Tyr-76 and Tyr-121 each carry phosphotyrosine. At Lys-171 the chain carries N6-acetyllysine.

This sequence belongs to the peptidase T1A family. The 26S proteasome consists of a 20S proteasome core and two 19S regulatory subunits. The 20S proteasome core is a barrel-shaped complex made of 28 subunits that are arranged in four stacked rings. The two outer rings are each formed by seven alpha subunits, and the two inner rings are formed by seven beta subunits. The proteolytic activity is exerted by three beta-subunits PSMB5, PSMB6 and PSMB7. Phosphorylated on tyrosine residues; which may be important for nuclear import.

The protein resides in the cytoplasm. It is found in the nucleus. Component of the 20S core proteasome complex involved in the proteolytic degradation of most intracellular proteins. This complex plays numerous essential roles within the cell by associating with different regulatory particles. Associated with two 19S regulatory particles, forms the 26S proteasome and thus participates in the ATP-dependent degradation of ubiquitinated proteins. The 26S proteasome plays a key role in the maintenance of protein homeostasis by removing misfolded or damaged proteins that could impair cellular functions, and by removing proteins whose functions are no longer required. Associated with the PA200 or PA28, the 20S proteasome mediates ubiquitin-independent protein degradation. This type of proteolysis is required in several pathways including spermatogenesis (20S-PA200 complex) or generation of a subset of MHC class I-presented antigenic peptides (20S-PA28 complex). The sequence is that of Proteasome subunit alpha type-2 (PSMA2) from Bos taurus (Bovine).